Consider the following 641-residue polypeptide: Probable potassium transport system protein Kup 4 (641 aa).

Transmembrane regions (helical) follow at residues A31–L51, T64–I84, I119–P139, G155–A175, I183–L203, A221–L241, W265–I285, L298–A318, I355–F375, L381–F401, L412–A432, and I437–T457.

Belongs to the HAK/KUP transporter (TC 2.A.72) family.

Its subcellular location is the cell inner membrane. The enzyme catalyses K(+)(in) + H(+)(in) = K(+)(out) + H(+)(out). In terms of biological role, transport of potassium into the cell. Likely operates as a K(+):H(+) symporter. The polypeptide is Probable potassium transport system protein Kup 4 (Bradyrhizobium sp. (strain BTAi1 / ATCC BAA-1182)).